Consider the following 374-residue polypeptide: Pectate lyase 1 (374 aa).

An N-terminal signal peptide occupies residues 1 to 21 (MDSPCLVALLVFSFVIGSCFS). 2 disulfide bridges follow: Cys28–Cys45 and Cys128–Cys147. A glycan (N-linked (GlcNAc...) asparagine) is linked at Asn158. Ca(2+) is bound at residue Asp170. Asn191 is a glycosylation site (N-linked (GlcNAc...) (complex) asparagine). The Ca(2+) site is built by Asp194 and Asp198. Residue Arg250 is part of the active site. Asn293 carries an N-linked (GlcNAc...) asparagine glycan. The cysteines at positions 306 and 312 are disulfide-linked. An N-linked (GlcNAc...) (complex) asparagine glycan is attached at Asn354.

Belongs to the polysaccharide lyase 1 family. Amb a subfamily. Ca(2+) is required as a cofactor. Post-translationally, N-glycosylated; contains fucose and xylose.

The catalysed reaction is Eliminative cleavage of (1-&gt;4)-alpha-D-galacturonan to give oligosaccharides with 4-deoxy-alpha-D-galact-4-enuronosyl groups at their non-reducing ends.. Its pathway is glycan metabolism; pectin degradation; 2-dehydro-3-deoxy-D-gluconate from pectin: step 2/5. Functionally, has pectate lyase activity. The chain is Pectate lyase 1 from Cryptomeria japonica (Japanese cedar).